Here is a 250-residue protein sequence, read N- to C-terminus: 4-hydroxy-tetrahydrodipicolinate reductase (250 aa).

Residues 10 to 15, 78 to 80, and 105 to 108 each bind NAD(+); these read GVKGRI, GTT, and APNF. The Proton donor/acceptor role is filled by His-135. Residue His-136 participates in (S)-2,3,4,5-tetrahydrodipicolinate binding. Residue Lys-139 is the Proton donor of the active site. A (S)-2,3,4,5-tetrahydrodipicolinate-binding site is contributed by 145–146; it reads GT.

It belongs to the DapB family.

It is found in the cytoplasm. It carries out the reaction (S)-2,3,4,5-tetrahydrodipicolinate + NAD(+) + H2O = (2S,4S)-4-hydroxy-2,3,4,5-tetrahydrodipicolinate + NADH + H(+). It catalyses the reaction (S)-2,3,4,5-tetrahydrodipicolinate + NADP(+) + H2O = (2S,4S)-4-hydroxy-2,3,4,5-tetrahydrodipicolinate + NADPH + H(+). The protein operates within amino-acid biosynthesis; L-lysine biosynthesis via DAP pathway; (S)-tetrahydrodipicolinate from L-aspartate: step 4/4. In terms of biological role, catalyzes the conversion of 4-hydroxy-tetrahydrodipicolinate (HTPA) to tetrahydrodipicolinate. In Streptomyces avermitilis (strain ATCC 31267 / DSM 46492 / JCM 5070 / NBRC 14893 / NCIMB 12804 / NRRL 8165 / MA-4680), this protein is 4-hydroxy-tetrahydrodipicolinate reductase.